We begin with the raw amino-acid sequence, 304 residues long: Olfactory receptor 4K13 (304 aa).

At Met1–Ile25 the chain is on the extracellular side. N-linked (GlcNAc...) asparagine glycosylation is present at Asn5. A helical membrane pass occupies residues Leu26 to Val49. Over Thr50–Thr57 the chain is Cytoplasmic. The helical transmembrane segment at Pro58 to Pro79 threads the bilayer. The Extracellular segment spans residues Lys80–Gln100. Residues Cys97 and Cys189 are joined by a disulfide bond. Residues Met101 to Ile120 traverse the membrane as a helical segment. At Asp121–Arg139 the chain is on the cytoplasmic side. The chain crosses the membrane as a helical span at residues Val140 to Ser158. The Extracellular portion of the chain corresponds to Gln159–Leu195. Residues Gln196–Gly219 traverse the membrane as a helical segment. Residues Val220–Lys235 are Cytoplasmic-facing. Residues Ala236–Tyr258 form a helical membrane-spanning segment. Over Val259 to Lys269 the chain is Extracellular. A helical membrane pass occupies residues Ile270–Leu289. Over Arg290–Ile304 the chain is Cytoplasmic.

It belongs to the G-protein coupled receptor 1 family.

It is found in the cell membrane. In terms of biological role, odorant receptor. The sequence is that of Olfactory receptor 4K13 (OR4K13) from Homo sapiens (Human).